The chain runs to 347 residues: Dihydroorotase (347 aa).

Residues His-13 and His-15 each contribute to the Zn(2+) site. Substrate contacts are provided by residues 15 to 17 (HLR) and Asn-41. Positions 99, 136, and 174 each coordinate Zn(2+). An N6-carboxylysine modification is found at Lys-99. His-136 contacts substrate. A substrate-binding site is contributed by Leu-219. Asp-247 contributes to the Zn(2+) binding site. Asp-247 is a catalytic residue. The substrate site is built by His-251 and Ala-263.

This sequence belongs to the metallo-dependent hydrolases superfamily. DHOase family. Class II DHOase subfamily. Homodimer. The cofactor is Zn(2+).

It carries out the reaction (S)-dihydroorotate + H2O = N-carbamoyl-L-aspartate + H(+). It participates in pyrimidine metabolism; UMP biosynthesis via de novo pathway; (S)-dihydroorotate from bicarbonate: step 3/3. Catalyzes the reversible cyclization of carbamoyl aspartate to dihydroorotate. This is Dihydroorotase from Rhizobium meliloti (strain 1021) (Ensifer meliloti).